We begin with the raw amino-acid sequence, 371 residues long: Flagellar P-ring protein (371 aa).

Positions 1–24 are cleaved as a signal peptide; the sequence is MSIRVLLFSIFTGFLLAAAGPALA. Over residues 301 to 321 the composition is skewed to polar residues; sequence PQPFSSGTTATQPQTDISAQK. Positions 301–322 are disordered; the sequence is PQPFSSGTTATQPQTDISAQKT.

Belongs to the FlgI family. In terms of assembly, the basal body constitutes a major portion of the flagellar organelle and consists of four rings (L,P,S, and M) mounted on a central rod.

The protein localises to the periplasm. The protein resides in the bacterial flagellum basal body. Assembles around the rod to form the L-ring and probably protects the motor/basal body from shearing forces during rotation. This Allorhizobium ampelinum (strain ATCC BAA-846 / DSM 112012 / S4) (Agrobacterium vitis (strain S4)) protein is Flagellar P-ring protein.